Here is a 325-residue protein sequence, read N- to C-terminus: Olfactory receptor 5H6 (325 aa).

At 1–41 (MFLYLCFIFQRTCSEEMEEENATLLTEFVLTGFLHQPDCKI) the chain is on the extracellular side. An N-linked (GlcNAc...) asparagine glycan is attached at Asn21. The chain crosses the membrane as a helical span at residues 42–62 (PLFLAFLVIYLITIMGNLGLI). Residues 63-70 (VLIWKDPH) lie on the Cytoplasmic side of the membrane. The helical transmembrane segment at 71-91 (LHIPMYLFLGSLAFVDASLSS) threads the bilayer. The Extracellular segment spans residues 92–115 (TVTPKMLINFLAKSKMISLSECMV). A disulfide bridge connects residues Cys113 and Cys205. Residues 116 to 136 (QFFSLVTTVTTECFLLATMAY) traverse the membrane as a helical segment. Topologically, residues 137–155 (DRYVAICKALLYPVIMTNE) are cytoplasmic. A helical transmembrane segment spans residues 156 to 176 (LCIQLLVLSFIGGLLHALIHE). Topologically, residues 177–212 (AFSFRLTFCNSNIIQHFYCDIIPLLKISCTDSSINF) are extracellular. A helical transmembrane segment spans residues 213-233 (LMVFIFAGSVQVFTIGTILIS). The Cytoplasmic portion of the chain corresponds to 234–253 (YTIILFTILEKKSIKGIRKA). Residues 254-274 (VSTCGAHLLSVSLYYGPLTFK) traverse the membrane as a helical segment. At 275 to 287 (YLGSASPQADDQD) the chain is on the extracellular side. Residues 288 to 308 (MMESLFYTVIVPLLNPMIYSL) traverse the membrane as a helical segment. At 309–325 (RNKQVIASFTKMFKSNV) the chain is on the cytoplasmic side.

The protein belongs to the G-protein coupled receptor 1 family.

The protein localises to the cell membrane. Odorant receptor. In Homo sapiens (Human), this protein is Olfactory receptor 5H6 (OR5H6).